Consider the following 346-residue polypeptide: Leucine zipper protein 2 (346 aa).

An N-terminal signal peptide occupies residues 1–19 (MKFSPAHYLLPLLPALVLS). Residues 16 to 211 (LVLSTRQDYE…QMKAMKETVQ (196 aa)) are a coiled coil. Asn-133 carries an N-linked (GlcNAc...) asparagine glycan. The segment at 164-192 (LRYGKKDLLFKAQQLTDLEQKLAVAKNEL) is leucine-zipper. Disordered stretches follow at residues 221–240 (QPPP…LLPP) and 248–346 (PDAA…EKIL). Residues 250-261 (AAAKSKPQQSAS) are compositionally biased toward low complexity. Over residues 262 to 283 (GNNESSQVESTKEGNPSTTACD) the composition is skewed to polar residues. Asn-264 carries an N-linked (GlcNAc...) asparagine glycan. The segment covering 286–298 (DEGRPCSMKHKES) has biased composition (basic and acidic residues). Asn-302 carries N-linked (GlcNAc...) asparagine glycosylation.

Its subcellular location is the secreted. This Homo sapiens (Human) protein is Leucine zipper protein 2 (LUZP2).